We begin with the raw amino-acid sequence, 331 residues long: Thioredoxin-like fold domain-containing protein MRL7, chloroplastic (331 aa).

Residues 1–59 (MSFFAVACSAPRSSMLLTGLNSSFSDMHRSPLFVFPVTISSRSVKRFAAVSSDSVLDPE) constitute a chloroplast transit peptide. Disordered regions lie at residues 52 to 105 (SDSV…ADAV) and 141 to 160 (GVDE…EDPD). The segment covering 142–160 (VDEEEEEEEEMVVEEEDPD) has biased composition (acidic residues).

In terms of assembly, component of the transcriptionally active chromosome (TAC) complexes. Interacts with FSD2 and PRDA1. Interacts with FSD3 and CITRX/TRXZ. Binds to PTAC12/HMR/PAP5. As to expression, expressed in leaves, shoots, stems, cauline leaves, flower buds, flowers and siliques.

It is found in the plastid. It localises to the chloroplast. The protein resides in the chloroplast stroma. Its subcellular location is the chloroplast nucleoid. The protein localises to the nucleus. Functionally, plays an essential role in early steps of chloroplast development. Involved in the regulation of plastid gene expression. May positively regulate plastid-encoded RNA polymerase (PEP) activity through binding to FSD3 and CITRX/TRXZ. Involved in redox-mediated regulation of chloroplast development. Possesses disulfide reductase activity in vitro. Required for the proper function of the plastid transcriptional machinery and protein accumulation in thylakoid membranes. May function as molecular chaperone to ensure proper organization of the nucleoids in chloroplasts. May mediate some aspect of thylakoid structure or function that controls non-photochemical quenching (NPQ). Participates in the early light signaling events of photobody biogenesis in chloroplasts. May mediate the degradation of two repressors of chloroplast biogenesis, PIF1 and PIF3 in nucleus. Collaboratively with PTAC12/HMR/PAP5, involved in the regulation of thermoresponsive responses via the stabilization of PIF4 in the daytime to initiate thermomorphogenesis. The protein is Thioredoxin-like fold domain-containing protein MRL7, chloroplastic of Arabidopsis thaliana (Mouse-ear cress).